The chain runs to 2711 residues: Chromodomain-helicase-DNA-binding protein 6 (2711 aa).

Basic and acidic residues-rich tracts occupy residues 1 to 12 (MKMKIQKKEKQL), 100 to 115 (EPGEQEGTKGSKDREP), 122 to 151 (EPKEPKEPRRAKEPKRAKEPKETKQKDGVK), and 158 to 171 (EASGTKEGKEKRSC). Disordered regions lie at residues 1–52 (MKMK…EEAA) and 66–243 (EEAD…QVKR). Residues 1–746 (MKMKIQKKEK…MMELRKCCNH (746 aa)) are required for DNA-dependent ATPase activity. Low complexity predominate over residues 214 to 224 (SLPNPSLQSPE). 2 Chromo domains span residues 291 to 342 (NIIE…KDPR) and 374 to 438 (IEID…KHVE). Positions 472 to 646 (LFNWYNRKNC…FSLLNFLEPS (175 aa)) constitute a Helicase ATP-binding domain. 485 to 492 (DEMGLGKT) contributes to the ATP binding site. A DEAH box motif is present at residues 597–600 (DEAH). The Helicase C-terminal domain maps to 786–955 (LIDKLLPKLI…LSKMEVEDLL (170 aa)). Residues 1318–1389 (SLSAEQGVTD…SDPDKSPWPV (72 aa)) are disordered. Positions 1320 to 1329 (SAEQGVTDGT) are enriched in polar residues. Basic and acidic residues predominate over residues 1332–1350 (IPERGNIDKEDSAEDKLDG). In terms of domain architecture, Myb-like spans 1448-1502 (RWTRREQADFYRTVSSFGVVYDQEKKAFDWTQFRIISRLDKKSDESLEHYFYSFV). Position 1865 is a phosphoserine (Ser1865). Disordered stretches follow at residues 1951 to 1978 (SEDSEVEKPKAYQPDLYRSKANNSTVEG), 1997 to 2059 (EPWK…ASGI), 2124 to 2147 (LPTPVLSSSAGSRSSLSEPEATEH), 2321 to 2350 (TTLSTTHPEVPGATSSAPEPTAAASSQAEK), 2373 to 2419 (GFGT…RGFL), 2550 to 2602 (SASL…ITTS), and 2641 to 2711 (RHSE…EDTN). The span at 2017 to 2036 (SEPKPEDMDFENKDDYEKDG) shows a compositional bias: basic and acidic residues. 2 stretches are compositionally biased toward low complexity: residues 2130-2140 (SSSAGSRSSLS) and 2333-2349 (ATSSAPEPTAAASSQAE). The segment covering 2550–2563 (SASLASTKSGTSAT) has biased composition (low complexity). Positions 2565–2586 (KSTEDKLSGHDVNTDALVDDKP) are enriched in basic and acidic residues. 2 stretches are compositionally biased toward polar residues: residues 2591-2602 (FSDQSEPTITTS) and 2677-2688 (SDQNCTESSATV). A compositionally biased stretch (basic and acidic residues) spans 2690–2711 (PEREHVAQAREEGLKDSNEDTN).

This sequence belongs to the SNF2/RAD54 helicase family. Interacts with NFE2L2; involved in activation of the transcription. As to expression, widely expressed.

The protein localises to the nucleus. Its subcellular location is the nucleoplasm. It carries out the reaction ATP + H2O = ADP + phosphate + H(+). ATP-dependent chromatin-remodeling factor. Regulates transcription by disrupting nucleosomes in a largely non-sliding manner which strongly increases the accessibility of chromatin. Activates transcription of specific genes in response to oxidative stress through interaction with NFE2L2. The sequence is that of Chromodomain-helicase-DNA-binding protein 6 (Chd6) from Mus musculus (Mouse).